Here is a 1719-residue protein sequence, read N- to C-terminus: 5'-3' exoribonuclease 1 (1719 aa).

Basic and acidic residues predominate over residues 1268–1298 (HKSGFTDHSVRHQQRKHDSQRKFKEEYKSPK). A disordered region spans residues 1268–1317 (HKSGFTDHSVRHQQRKHDSQRKFKEEYKSPKAECQSQKLSSKQTSGGSAR). Over residues 1301 to 1314 (CQSQKLSSKQTSGG) the composition is skewed to polar residues. Serine 1382 is modified (phosphoserine). Residues 1397–1430 (ILKIDSPDTRDSKNDMKKSDNEATVSSRRDERGV) are compositionally biased toward basic and acidic residues. 2 disordered regions span residues 1397 to 1445 (ILKI…KPHG) and 1634 to 1719 (ENKE…KPSE). Polar residues predominate over residues 1638–1660 (AQSSQATPLQTNKPGSSEATKMT). Positions 1661 to 1680 (PQESPPASSSSSQAAQPVSS) are enriched in low complexity. Polar residues predominate over residues 1681 to 1690 (HVETASQGHV).

It belongs to the 5'-3' exonuclease family. As to quaternary structure, found in a mRNP complex with UPF1, UPF2, UPF3B and XRN1. Associates with alpha and beta tubulins. Interacts with DIS3L2. Interacts with ZC3HAV1 in an RNA-dependent manner. Interacts with ZFP36L1. Interacts with TRIM71 (via NHL repeats) in an RNA-dependent manner. Interacts with YTHDC2 (via ANK repeats). Interacts with DHX34; the interaction is RNA-independent. As to expression, expressed in heart, brain (spinal cord, dorsal root and superior cervical ganglia, neurons of the cerebrum and brain stem), peripheral nerve fibers in the skin and intestine, spleen, lung, liver, skeletal muscle, kidney and testis.

It localises to the cytoplasm. Major 5'-3' exoribonuclease involved in mRNA decay. Required for the 5'-3'-processing of the G4 tetraplex-containing DNA and RNA substrates. The kinetic of hydrolysis is faster for G4 RNA tetraplex than for G4 DNA tetraplex and monomeric RNA tetraplex. Binds to RNA and DNA. Plays a role in replication-dependent histone mRNA degradation. The polypeptide is 5'-3' exoribonuclease 1 (Mus musculus (Mouse)).